Consider the following 680-residue polypeptide: Probable oxidoreductase YoaE (680 aa).

The region spanning 9-66 (NGIFKSVCSLDCPDQCGLLIHKKDGKIVKVQGDPDHPVTAGNICNKVRNMTERIYDEK) is the 4Fe-4S Mo/W bis-MGD-type domain. Residues cysteine 16, cysteine 20, cysteine 24, and cysteine 52 each contribute to the [4Fe-4S] cluster site.

The protein belongs to the prokaryotic molybdopterin-containing oxidoreductase family. Mo-bis(molybdopterin guanine dinucleotide) serves as cofactor.

This Bacillus subtilis (strain 168) protein is Probable oxidoreductase YoaE (yoaE).